The following is a 124-amino-acid chain: Small ribosomal subunit protein uS13 (124 aa).

The tract at residues 95-124 (GLPVNGQRTRTNARSSKGPRRTVAGKKKAR) is disordered. Residues 100–109 (GQRTRTNARS) show a composition bias toward polar residues. Basic residues predominate over residues 111-124 (KGPRRTVAGKKKAR).

This sequence belongs to the universal ribosomal protein uS13 family. As to quaternary structure, part of the 30S ribosomal subunit. Forms a loose heterodimer with protein S19. Forms two bridges to the 50S subunit in the 70S ribosome.

Its function is as follows. Located at the top of the head of the 30S subunit, it contacts several helices of the 16S rRNA. In the 70S ribosome it contacts the 23S rRNA (bridge B1a) and protein L5 of the 50S subunit (bridge B1b), connecting the 2 subunits; these bridges are implicated in subunit movement. Contacts the tRNAs in the A and P-sites. This Tropheryma whipplei (strain TW08/27) (Whipple's bacillus) protein is Small ribosomal subunit protein uS13.